The primary structure comprises 272 residues: Ribosomal RNA small subunit methyltransferase A (272 aa).

S-adenosyl-L-methionine contacts are provided by Asn-16, Leu-18, Gly-43, Glu-64, Asp-89, and Asn-110.

Belongs to the class I-like SAM-binding methyltransferase superfamily. rRNA adenine N(6)-methyltransferase family. RsmA subfamily.

The protein resides in the cytoplasm. The catalysed reaction is adenosine(1518)/adenosine(1519) in 16S rRNA + 4 S-adenosyl-L-methionine = N(6)-dimethyladenosine(1518)/N(6)-dimethyladenosine(1519) in 16S rRNA + 4 S-adenosyl-L-homocysteine + 4 H(+). Its function is as follows. Specifically dimethylates two adjacent adenosines (A1518 and A1519) in the loop of a conserved hairpin near the 3'-end of 16S rRNA in the 30S particle. May play a critical role in biogenesis of 30S subunits. This chain is Ribosomal RNA small subunit methyltransferase A, found in Pseudomonas fluorescens (strain Pf0-1).